A 259-amino-acid chain; its full sequence is Isoepoxydon dehydrogenase patN (259 aa).

Residues Asn96 and Arg125 each contribute to the NADP(+) site. Residues Ser143 and Ser144 each act as proton donor in the active site. Tyr158, Lys162, and Ile191 together coordinate NADP(+). Tyr158 acts as the Proton acceptor in catalysis. The active-site Lowers pKa of active site Tyr is Lys162.

It belongs to the short-chain dehydrogenases/reductases (SDR) family.

It localises to the cytoplasm. The protein resides in the cytosol. It carries out the reaction isoepoxydon + NADP(+) = phyllostine + NADPH + H(+). It functions in the pathway mycotoxin biosynthesis; patulin biosynthesis. Its function is as follows. Isoepoxydon dehydrogenase; part of the gene cluster that mediates the biosynthesis of patulin, an acetate-derived tetraketide mycotoxin produced by several fungal species that shows antimicrobial properties against several bacteria. PatN catalyzes the conversion of isoepoxydon into phyllostine. The pathway begins with the synthesis of 6-methylsalicylic acid by the polyketide synthase (PKS) patK via condensation of acetate and malonate units. The 6-methylsalicylic acid decarboxylase patG then catalyzes the decarboxylation of 6-methylsalicylic acid to yield m-cresol (also known as 3-methylphenol). These first reactions occur in the cytosol. The intermediate m-cresol is then transported into the endoplasmic reticulum where the cytochrome P450 monooxygenase patH converts it to m-hydroxybenzyl alcohol, which is further converted to gentisyl alcohol by the cytochrome P450 monooxygenase patI. The oxidoreductases patJ and patO further convert gentisyl alcohol to isoepoxydon in the vacuole. PatN catalyzes then the transformation of isoepoxydon into phyllostine. The cluster protein patF is responsible for the conversion from phyllostine to neopatulin whereas the alcohol dehydrogenase patD converts neopatulin to E-ascladiol. The steps between isoepoxydon and E-ascladiol occur in the cytosol, and E-ascladiol is probably secreted to the extracellular space by one of the cluster-specific transporters patC or patM. Finally, the secreted patulin synthase patE catalyzes the conversion of E-ascladiol to patulin. The protein is Isoepoxydon dehydrogenase patN of Aspergillus clavatus (strain ATCC 1007 / CBS 513.65 / DSM 816 / NCTC 3887 / NRRL 1 / QM 1276 / 107).